A 431-amino-acid polypeptide reads, in one-letter code: Serine hydroxymethyltransferase (431 aa).

122–124 (GHI) contacts (6S)-5,6,7,8-tetrahydrofolate. An N6-(pyridoxal phosphate)lysine modification is found at Lys228. Position 245 (Glu245) interacts with (6S)-5,6,7,8-tetrahydrofolate.

It belongs to the SHMT family. In terms of assembly, homodimer. Requires pyridoxal 5'-phosphate as cofactor.

It is found in the cytoplasm. It participates in amino-acid biosynthesis; glycine biosynthesis; glycine from L-serine: step 1/1. Catalyzes the reversible interconversion of serine and glycine with a modified folate serving as the one-carbon carrier. Also exhibits a pteridine-independent aldolase activity toward beta-hydroxyamino acids, producing glycine and aldehydes, via a retro-aldol mechanism. The protein is Serine hydroxymethyltransferase of Thermococcus kodakarensis (strain ATCC BAA-918 / JCM 12380 / KOD1) (Pyrococcus kodakaraensis (strain KOD1)).